Consider the following 268-residue polypeptide: Ribosomal RNA small subunit methyltransferase A (268 aa).

S-adenosyl-L-methionine contacts are provided by Asn23, Ile25, Gly50, Glu72, Asp97, and Asn116.

It belongs to the class I-like SAM-binding methyltransferase superfamily. rRNA adenine N(6)-methyltransferase family. RsmA subfamily.

It localises to the cytoplasm. The enzyme catalyses adenosine(1518)/adenosine(1519) in 16S rRNA + 4 S-adenosyl-L-methionine = N(6)-dimethyladenosine(1518)/N(6)-dimethyladenosine(1519) in 16S rRNA + 4 S-adenosyl-L-homocysteine + 4 H(+). In terms of biological role, specifically dimethylates two adjacent adenosines (A1518 and A1519) in the loop of a conserved hairpin near the 3'-end of 16S rRNA in the 30S particle. May play a critical role in biogenesis of 30S subunits. The polypeptide is Ribosomal RNA small subunit methyltransferase A (Rickettsia bellii (strain OSU 85-389)).